Reading from the N-terminus, the 459-residue chain is Sorting nexin-8 (459 aa).

The interval 1–53 is disordered; the sequence is MTGGAMDPLPTAPGAAAAEAEVDEEADPPAADSPVPPVSEPRAPDAGQMQVPP. A PX domain is found at 68-176; it reads ARDAVQVELV…KLFLSFSGPD (109 aa). Positions 104, 130, and 143 each coordinate a 1,2-diacyl-sn-glycero-3-phospho-(1D-myo-inositol-3-phosphate).

It belongs to the sorting nexin family.

It is found in the early endosome membrane. Functionally, may be involved in several stages of intracellular trafficking. May play a role in intracellular protein transport from early endosomes to the trans-Golgi network. The chain is Sorting nexin-8 (SNX8) from Bos taurus (Bovine).